Consider the following 257-residue polypeptide: 3-deoxy-manno-octulosonate cytidylyltransferase (257 aa).

The protein belongs to the KdsB family.

The protein localises to the cytoplasm. It carries out the reaction 3-deoxy-alpha-D-manno-oct-2-ulosonate + CTP = CMP-3-deoxy-beta-D-manno-octulosonate + diphosphate. It functions in the pathway nucleotide-sugar biosynthesis; CMP-3-deoxy-D-manno-octulosonate biosynthesis; CMP-3-deoxy-D-manno-octulosonate from 3-deoxy-D-manno-octulosonate and CTP: step 1/1. The protein operates within bacterial outer membrane biogenesis; lipopolysaccharide biosynthesis. Activates KDO (a required 8-carbon sugar) for incorporation into bacterial lipopolysaccharide in Gram-negative bacteria. The polypeptide is 3-deoxy-manno-octulosonate cytidylyltransferase (Chromohalobacter salexigens (strain ATCC BAA-138 / DSM 3043 / CIP 106854 / NCIMB 13768 / 1H11)).